We begin with the raw amino-acid sequence, 89 residues long: Snake venom serine protease rhinocerase (89 aa).

The region spanning 1 to 89 is the Peptidase S1 domain; that stretch reads VIGGAECDIN…KVFDYIPWIK (89 aa). Aspartate 45 acts as the Charge relay system in catalysis. Cysteine 64 and cysteine 69 are joined by a disulfide.

The protein belongs to the peptidase S1 family. Snake venom subfamily. Glycosylated. As to expression, expressed by the venom gland.

Its subcellular location is the secreted. Its activity is regulated as follows. Inhibited by PMSF. Not inhibited by benzamidine. In terms of biological role, snake venom serine protease that cleaves fibrinogen alpha and beta chains (FGA and FGB), but not gamma chains. Exhibits fibrinolytic and kininogenolytic. Preferentially cleaves after Arg and Lys residues. The protein is Snake venom serine protease rhinocerase of Bitis rhinoceros (West African gaboon viper).